The chain runs to 263 residues: Indole-3-glycerol phosphate synthase (263 aa).

It belongs to the TrpC family.

It catalyses the reaction 1-(2-carboxyphenylamino)-1-deoxy-D-ribulose 5-phosphate + H(+) = (1S,2R)-1-C-(indol-3-yl)glycerol 3-phosphate + CO2 + H2O. The protein operates within amino-acid biosynthesis; L-tryptophan biosynthesis; L-tryptophan from chorismate: step 4/5. This Rhodospirillum rubrum (strain ATCC 11170 / ATH 1.1.1 / DSM 467 / LMG 4362 / NCIMB 8255 / S1) protein is Indole-3-glycerol phosphate synthase.